We begin with the raw amino-acid sequence, 442 residues long: GTPase Der (442 aa).

EngA-type G domains are found at residues 3-167 (PTIV…PPDV) and 177-350 (PRIA…AAAM). GTP is bound by residues 9-16 (GRPNVGKS), 56-60 (DTAGF), 119-122 (NKSE), 183-190 (GRPNVGKS), 230-234 (DTAGL), and 295-298 (NKWD). Residues 351–435 (VNLSTPRLTR…PLRIQFRTAH (85 aa)) enclose the KH-like domain.

This sequence belongs to the TRAFAC class TrmE-Era-EngA-EngB-Septin-like GTPase superfamily. EngA (Der) GTPase family. In terms of assembly, associates with the 50S ribosomal subunit.

Functionally, GTPase that plays an essential role in the late steps of ribosome biogenesis. This is GTPase Der from Aromatoleum aromaticum (strain DSM 19018 / LMG 30748 / EbN1) (Azoarcus sp. (strain EbN1)).